A 473-amino-acid polypeptide reads, in one-letter code: MRIYNTATRQVEEFTTYTPGLARGYVCGITPYDHVHVGHGRVYVFFDMFRRYLESLGYEVRLVVNFTDIDDKIIAKAREEFGPEAYKRWREVPERYIAEFFEVSKRLFIKPAYAYPRVTENVDDMVKWISALVEKGFAYVAPDGSVYFEVGKVPNYGVLSRQRIEELIAGARVEPEPGKRNPLDFALWKSWSPGEPWWNSPWCPGRPGWHLECVVMSTKHLGVPFDFHGGGADLIFPHHENEIAIAKAYFGVDNFAKYWIHVGYLTVRGEKMSKSLGNVITLREVLSKYSGEALRLAYAMSHYRKPMEFSFELLDQAEDIVKTLYTAYDELSQAVADAGDADRERVDIGNFKAAFYSALEDDFSTPEAVQQLYAAAKYIISTVLHKVDKLSKNTVLAILADYVKMADVIGVLERREVAKEVEEAVKALVEVRARLRSERLYQLADYVRERAKALGAELHDFGPRTYYTIRRRG.

A Zn(2+)-binding site is contributed by cysteine 27. The short motif at isoleucine 29–histidine 39 is the 'HIGH' region element. Zn(2+) contacts are provided by cysteine 213, histidine 238, and glutamate 242. The short motif at lysine 271–serine 275 is the 'KMSKS' region element. An ATP-binding site is contributed by lysine 274.

The protein belongs to the class-I aminoacyl-tRNA synthetase family. It depends on Zn(2+) as a cofactor.

It localises to the cytoplasm. It carries out the reaction tRNA(Cys) + L-cysteine + ATP = L-cysteinyl-tRNA(Cys) + AMP + diphosphate. The protein is Cysteine--tRNA ligase of Pyrobaculum calidifontis (strain DSM 21063 / JCM 11548 / VA1).